Consider the following 395-residue polypeptide: Long-chain-alcohol dehydrogenase 1 (395 aa).

NAD(+) contacts are provided by residues 98-102 and 141-144; these read GSALD and TTSG.

The protein belongs to the iron-containing alcohol dehydrogenase family. Homooctamer.

It catalyses the reaction glycerol + NAD(+) = dihydroxyacetone + NADH + H(+). The enzyme catalyses a long-chain primary fatty alcohol + 2 NAD(+) + H2O = a long-chain fatty acid + 2 NADH + 3 H(+). Long-chain alkyl alcohol dehydrogenase that can oxidize a broad range of alkyl alcohols from ethanol to 1-triacontanol (C2 to C30) as well as 1,3-propanediol and acetaldehyde. The best substrate is ethanol. Also oxidizes glycerol. In Geobacillus thermodenitrificans (strain NG80-2), this protein is Long-chain-alcohol dehydrogenase 1 (adh1).